The chain runs to 151 residues: 3-dehydroquinate dehydratase (151 aa).

Residue Tyr24 is the Proton acceptor of the active site. Positions 76, 82, and 89 each coordinate substrate. The Proton donor role is filled by His102. Residues 103–104 and Arg113 each bind substrate; that span reads VS.

The protein belongs to the type-II 3-dehydroquinase family. In terms of assembly, homododecamer.

The enzyme catalyses 3-dehydroquinate = 3-dehydroshikimate + H2O. The protein operates within metabolic intermediate biosynthesis; chorismate biosynthesis; chorismate from D-erythrose 4-phosphate and phosphoenolpyruvate: step 3/7. In terms of biological role, catalyzes a trans-dehydration via an enolate intermediate. This is 3-dehydroquinate dehydratase from Rhodopseudomonas palustris (strain TIE-1).